Here is a 1121-residue protein sequence, read N- to C-terminus: Putative ATP-dependent RNA helicase ECM32 (1121 aa).

The tract at residues 157–187 is disordered; the sequence is NSTRKPRKKGGRRVGRGKKGRKGAKIKKEKK. Positions 160-184 are enriched in basic residues; it reads RKPRKKGGRRVGRGKKGRKGAKIKK. The residue at position 227 (Ser227) is a Phosphoserine. The interval 233-452 is disordered; that stretch reads AKVSKSETSR…NQEKNNGKTK (220 aa). The segment covering 251–263 has biased composition (basic residues); sequence NKGKGNKANHKKN. Positions 278-287 are enriched in polar residues; that stretch reads IRNNVRNSQP. The segment covering 307-316 has biased composition (basic and acidic residues); the sequence is GKNESVDKHQ. Low complexity predominate over residues 323-336; that stretch reads LNGNGSGSTNTTGL. Basic and acidic residues predominate over residues 342–363; the sequence is DHAGQKTKGNDKTGNKNPREAK. Residues 376–413 show a composition bias toward polar residues; sequence KSNNQPNKGTSRWTIGSDTESSREPSISPNENTTSITK. Ser392 is subject to Phosphoserine. A compositionally biased stretch (basic and acidic residues) spans 426-452; it reads LNEKSKTTTMPKKLETKNQEKNNGKTK. Residue Thr465 is modified to Phosphothreonine. 670-677 contacts ATP; sequence GPPGTGKT.

It belongs to the DNA2/NAM7 helicase family. Interacts with the peptidyl release factors SUP35 and weakly with SUP45.

The protein localises to the cytoplasm. It catalyses the reaction ATP + H2O = ADP + phosphate + H(+). Functionally, probable RNA helicase, which may be involved in modulation of the translation termination process. Probably unwinds double-stranded RNA. In vitro, unwinds covalently closed, circular DNA in the presence of a DNA topoisomerase TOP1 and replication factor-A protein RFA1. The protein is Putative ATP-dependent RNA helicase ECM32 (ECM32) of Saccharomyces cerevisiae (strain ATCC 204508 / S288c) (Baker's yeast).